The primary structure comprises 99 residues: Aspartyl/glutamyl-tRNA(Asn/Gln) amidotransferase subunit C (99 aa).

The protein belongs to the GatC family. As to quaternary structure, heterotrimer of A, B and C subunits.

It carries out the reaction L-glutamyl-tRNA(Gln) + L-glutamine + ATP + H2O = L-glutaminyl-tRNA(Gln) + L-glutamate + ADP + phosphate + H(+). It catalyses the reaction L-aspartyl-tRNA(Asn) + L-glutamine + ATP + H2O = L-asparaginyl-tRNA(Asn) + L-glutamate + ADP + phosphate + 2 H(+). In terms of biological role, allows the formation of correctly charged Asn-tRNA(Asn) or Gln-tRNA(Gln) through the transamidation of misacylated Asp-tRNA(Asn) or Glu-tRNA(Gln) in organisms which lack either or both of asparaginyl-tRNA or glutaminyl-tRNA synthetases. The reaction takes place in the presence of glutamine and ATP through an activated phospho-Asp-tRNA(Asn) or phospho-Glu-tRNA(Gln). In Rhodococcus opacus (strain B4), this protein is Aspartyl/glutamyl-tRNA(Asn/Gln) amidotransferase subunit C.